An 85-amino-acid polypeptide reads, in one-letter code: Acylphosphatase (85 aa).

The region spanning 3–85 (AARFVVSGVV…PARFRRLKTL (83 aa)) is the Acylphosphatase-like domain. Active-site residues include arginine 18 and asparagine 36. Positions 66–85 (PPRSRRSRARPARFRRLKTL) are disordered.

This sequence belongs to the acylphosphatase family.

It carries out the reaction an acyl phosphate + H2O = a carboxylate + phosphate + H(+). The polypeptide is Acylphosphatase (acyP) (Xanthomonas axonopodis pv. citri (strain 306)).